Consider the following 341-residue polypeptide: Enduracididine beta-hydroxylase (341 aa).

2 residues coordinate Fe cation: histidine 146 and glutamate 148. The disordered stretch occupies residues 203–223 (HRIHGKAPGDESARESALRER). Histidine 300 is a binding site for Fe cation.

Belongs to the clavaminate synthase family. Fe(2+) is required as a cofactor.

It carries out the reaction L-enduracididine + 2-oxoglutarate + O2 = (3S)-3-hydroxy-L-enduracididine + succinate + CO2. It participates in antibiotic biosynthesis. Its function is as follows. Hydroxylates the beta carbon of free L-enduracididine to produce (3S)-3-hydroxy-L-enduracididine in biosynthesis of the nonproteinogenic amino acid beta-hydroxyenduracididine, a component of antibiotic mannopeptimycin. This chain is Enduracididine beta-hydroxylase (mppO), found in Streptomyces hygroscopicus.